The sequence spans 694 residues: TBC1 domain family member 14 (694 aa).

Phosphoserine is present on S92. Residues 272 to 289 (TAQKDSKKTQKEYEDKAG) show a composition bias toward basic and acidic residues. Residues 272–305 (TAQKDSKKTQKEYEDKAGRPSRPPSPKQNVRKNL) form a disordered region. Phosphoserine is present on S296. Positions 402 to 612 (GIPPSVRGKV…RIWDVFCRDG (211 aa)) constitute a Rab-GAP TBC domain.

As to quaternary structure, interacts with ULK1. May interact with RAB11A and RAB11B, but does not exhibit any GTPase-activating activity toward these proteins. Interacts with TRAPPC8.

Its subcellular location is the golgi apparatus. The protein localises to the cis-Golgi network. It is found in the trans-Golgi network. Functionally, plays a role in the regulation of starvation-induced autophagosome formation. Together with the TRAPPIII complex, regulates a constitutive trafficking step from peripheral recycling endosomes to the early Golgi, maintaining the cycling pool of ATG9 required for initiation of autophagy. The chain is TBC1 domain family member 14 (Tbc1d14) from Mus musculus (Mouse).